Reading from the N-terminus, the 421-residue chain is Probable dual-specificity RNA methyltransferase RlmN (421 aa).

Residues 1 to 23 (MTATTAESGRPDQPPTAEAGRPV) are disordered. E127 serves as the catalytic Proton acceptor. The region spanning 133–372 (YPDRATVCVS…VTTVRDTRGR (240 aa)) is the Radical SAM core domain. An intrachain disulfide couples C140 to C378. 3 residues coordinate [4Fe-4S] cluster: C147, C151, and C154. Residues 202–203 (GE), S236, 259–261 (SLH), and N335 each bind S-adenosyl-L-methionine. The active-site S-methylcysteine intermediate is C378. A disordered region spans residues 383–421 (AEPAGKPERTDRPEQVGSDRLVEFGAVGSTTPDGDRVLR). The segment covering 387–396 (GKPERTDRPE) has biased composition (basic and acidic residues).

The protein belongs to the radical SAM superfamily. RlmN family. [4Fe-4S] cluster is required as a cofactor.

The protein resides in the cytoplasm. It carries out the reaction adenosine(2503) in 23S rRNA + 2 reduced [2Fe-2S]-[ferredoxin] + 2 S-adenosyl-L-methionine = 2-methyladenosine(2503) in 23S rRNA + 5'-deoxyadenosine + L-methionine + 2 oxidized [2Fe-2S]-[ferredoxin] + S-adenosyl-L-homocysteine. It catalyses the reaction adenosine(37) in tRNA + 2 reduced [2Fe-2S]-[ferredoxin] + 2 S-adenosyl-L-methionine = 2-methyladenosine(37) in tRNA + 5'-deoxyadenosine + L-methionine + 2 oxidized [2Fe-2S]-[ferredoxin] + S-adenosyl-L-homocysteine. Its function is as follows. Specifically methylates position 2 of adenine 2503 in 23S rRNA and position 2 of adenine 37 in tRNAs. The protein is Probable dual-specificity RNA methyltransferase RlmN of Frankia casuarinae (strain DSM 45818 / CECT 9043 / HFP020203 / CcI3).